Reading from the N-terminus, the 435-residue chain is Tryptophan--tRNA ligase (435 aa).

ATP is bound by residues 10-12 and 18-19; these read TTS and GN. The 'HIGH' region motif lies at 11–19; the sequence is TSGTPHLGN. Asp-143 is an L-tryptophan binding site. Residues 155-157, Leu-195, and 202-206 each bind ATP; these read GRD and KMSKS. A 'KMSKS' region motif is present at residues 202–206; sequence KMSKS.

It belongs to the class-I aminoacyl-tRNA synthetase family. In terms of assembly, homodimer.

It localises to the cytoplasm. It catalyses the reaction tRNA(Trp) + L-tryptophan + ATP = L-tryptophyl-tRNA(Trp) + AMP + diphosphate + H(+). In terms of biological role, catalyzes the attachment of tryptophan to tRNA(Trp). This Xylella fastidiosa (strain Temecula1 / ATCC 700964) protein is Tryptophan--tRNA ligase.